The chain runs to 995 residues: DExH-box ATP-dependent RNA helicase DExH1 (995 aa).

Disordered stretches follow at residues 1–42 (MPPH…EQRW) and 156–192 (KTTQ…ASKL). A compositionally biased stretch (gly residues) spans 25–37 (RGGGGRGGGGGGR). The span at 161–170 (SGSSGASASA) shows a compositional bias: low complexity. Positions 171–181 (FNDQQDRTSTL) are enriched in polar residues. The 168-residue stretch at 238–405 (LNSVSQNQVL…FGNSPTMHIP (168 aa)) folds into the Helicase ATP-binding domain. 251-258 (GETGCGKT) serves as a coordination point for ATP. Positions 352–355 (DEIH) match the DEIH box motif. The interval 429 to 450 (SSDSGNYQGSSRGRRRESESKK) is disordered. The region spanning 484 to 663 (QIDVDLVEAT…ELCLHIKSLQ (180 aa)) is the Helicase C-terminal domain.

Belongs to the DExH box helicase family.

It catalyses the reaction ATP + H2O = ADP + phosphate + H(+). This chain is DExH-box ATP-dependent RNA helicase DExH1, found in Arabidopsis thaliana (Mouse-ear cress).